Consider the following 204-residue polypeptide: CASP-like protein 3A1 (204 aa).

Over 1 to 39 (MGSIGNGRNGSEVGIQIPAMGNKEVLERPAIPRWPRLGV) the chain is Cytoplasmic. The chain crosses the membrane as a helical span at residues 40–60 (VMVATRAVALVMAVLSMALMI). Over 61–88 (SAKQRGSLKIFGIEIPLYANWSFSDSLE) the chain is Extracellular. Residue Asn-80 is glycosylated (N-linked (GlcNAc...) asparagine). Residues 89–109 (YLVGMSAVSAAYCLAQLLLTA) form a helical membrane-spanning segment. The Cytoplasmic segment spans residues 110-124 (HKAVKNAPVVQSRNY). Residues 125-145 (AWLLFTGDQIFAYAMMSAGSA) form a helical membrane-spanning segment. At 146-179 (AAAVANLNRTGIRHTALPNFCKPLPRFCDLSAAS) the chain is on the extracellular side. An N-linked (GlcNAc...) asparagine glycan is attached at Asn-153. The chain crosses the membrane as a helical span at residues 180–200 (IACAFLSCIFLAASAVIDVIW). Residues 201–204 (LSNM) lie on the Cytoplasmic side of the membrane.

The protein belongs to the Casparian strip membrane proteins (CASP) family. In terms of assembly, homodimer and heterodimers.

Its subcellular location is the cell membrane. This chain is CASP-like protein 3A1, found in Oryza sativa subsp. indica (Rice).